A 372-amino-acid chain; its full sequence is Protein REVEILLE 7 (372 aa).

In terms of domain architecture, HTH myb-type spans 71–125 (TVTKQREKWSEEEHDRFLEAIKLYGRGWRQIQEHIGTKTAVQIRSHAQKFFSKMA). The H-T-H motif DNA-binding region spans 98 to 121 (WRQIQEHIGTKTAVQIRSHAQKFF). The segment at 124–204 (MAQEADSRSE…RCSSPNSCTS (81 aa)) is disordered. Over residues 145-155 (RPKRKPAHPYP) the composition is skewed to basic residues. Positions 156-169 (RKSPVPYTQSPPPN) are enriched in pro residues. The span at 178 to 204 (KSPTSVLSSFGSEDQVNRCSSPNSCTS) shows a compositional bias: polar residues.

Its subcellular location is the nucleus. Functionally, transcription factor involved in phytochrome A-mediated cotyledon opening. Controlled by the central oscillator mediated by LHY and CCA1. Part of a regulatory circadian feedback loop. Regulates its own expression. The polypeptide is Protein REVEILLE 7 (RVE7) (Arabidopsis thaliana (Mouse-ear cress)).